Here is a 157-residue protein sequence, read N- to C-terminus: MGFPKVERLLINYKTLDEFKKFKGCGAQELSMLEELQANIIENDSESPFYGIYYGGSLIARMSLYMKRNGGEPFEITGTYLELYKLEVLPNFQKQGFGEMLVNYAKGLQFPIKTIARIHSAGFWDKLNFQPVSVPDGDFYVWHPETNLNAVTNEESA.

One can recognise an N-acetyltransferase domain in the interval 9 to 146; that stretch reads LLINYKTLDE…GDFYVWHPET (138 aa).

This is an uncharacterized protein from Bacillus anthracis (strain CDC 684 / NRRL 3495).